Here is a 257-residue protein sequence, read N- to C-terminus: Homeobox protein EMX1 (257 aa).

Positions 159 to 218 form a DNA-binding region, homeobox; that stretch reads PKRIRTAFSPSQLLRLERAFEKNHYVVGAERKQLAGSLSLSETQVKVWFQNRRTKYKRQK. The segment at 216 to 257 is disordered; the sequence is RQKLEEEGPESEQKKKGSHHINRWRIATKQANGEDIDVTSND. The segment covering 217-230 has biased composition (basic and acidic residues); sequence QKLEEEGPESEQKK.

It belongs to the EMX homeobox family. As to quaternary structure, interacts with WRD11 (via the N-terminal and the central portion of the protein); the interaction associates EMX1 with GLI3. Cerebral cortex. Expressed in the olfactory bulbs.

It localises to the nucleus. Its function is as follows. Transcription factor, which in cooperation with EMX2, acts to generate the boundary between the roof and archipallium in the developing brain. May function in combinations with OTX1/2 to specify cell fates in the developing central nervous system. The protein is Homeobox protein EMX1 (Emx1) of Mus musculus (Mouse).